The sequence spans 553 residues: Nucleoside-diphosphatase mig-23 (553 aa).

Residues 1–8 (MRVSRRFT) lie on the Cytoplasmic side of the membrane. Residues 9–29 (ILAITAMIFLSLIICIYAVAA) traverse the membrane as a helical segment. Over 30–489 (HTTVNVILQK…IVKETHSASE (460 aa)) the chain is Lumenal. Catalysis depends on E174, which acts as the Proton acceptor. N-linked (GlcNAc...) asparagine glycans are attached at residues N190 and N284. A helical transmembrane segment spans residues 490 to 510 (SLWAPLFFLSAVFCLFVLVCA). Topologically, residues 511-553 (KEHSLLCFDDKRRASFGLTRRQYSYKMLKEDRTSSSAFLENFA) are cytoplasmic.

The protein belongs to the GDA1/CD39 NTPase family.

Its subcellular location is the golgi apparatus membrane. The catalysed reaction is a ribonucleoside 5'-diphosphate + H2O = a ribonucleoside 5'-phosphate + phosphate + H(+). Functionally, seems to be able to hydrolyze ADP, UDP and GDP. Supports mig-17 glycosylation and surface expression, which is required for proper migration of distal tip cells during gonad morphogenesis. This is Nucleoside-diphosphatase mig-23 from Caenorhabditis briggsae.